The chain runs to 74 residues: Turripeptide OL135 (74 aa).

The first 20 residues, 1–20, serve as a signal peptide directing secretion; the sequence is MKVPIVLMLVLLLIMPLSDG. A propeptide spanning residues 21 to 28 is cleaved from the precursor; it reads YERKRXXX.

The protein belongs to the conopeptide P-like superfamily. In terms of processing, contains 3 disulfide bonds. In terms of tissue distribution, expressed by the venom duct.

It localises to the secreted. In terms of biological role, acts as a neurotoxin by inhibiting an ion channel. This is Turripeptide OL135 from Iotyrris olangoensis (Sea snail).